The following is a 464-amino-acid chain: tRNA modification GTPase MnmE (464 aa).

3 residues coordinate (6S)-5-formyl-5,6,7,8-tetrahydrofolate: Arg27, Glu89, and Arg128. The TrmE-type G domain maps to Gly225–Phe384. Residue Asn235 coordinates K(+). GTP-binding positions include Asn235 to Ser240, Thr254 to Thr260, and Asp279 to Gly282. Ser239 provides a ligand contact to Mg(2+). K(+) is bound by residues Thr254, Val256, and Thr259. Thr260 contributes to the Mg(2+) binding site. A (6S)-5-formyl-5,6,7,8-tetrahydrofolate-binding site is contributed by Lys464.

Belongs to the TRAFAC class TrmE-Era-EngA-EngB-Septin-like GTPase superfamily. TrmE GTPase family. In terms of assembly, homodimer. Heterotetramer of two MnmE and two MnmG subunits. K(+) is required as a cofactor.

It localises to the cytoplasm. In terms of biological role, exhibits a very high intrinsic GTPase hydrolysis rate. Involved in the addition of a carboxymethylaminomethyl (cmnm) group at the wobble position (U34) of certain tRNAs, forming tRNA-cmnm(5)s(2)U34. The polypeptide is tRNA modification GTPase MnmE (Pediococcus pentosaceus (strain ATCC 25745 / CCUG 21536 / LMG 10740 / 183-1w)).